The sequence spans 431 residues: uncharacterized protein (431 aa).

12 helical membrane-spanning segments follow: residues 33–53 (VARV…VIYL), 63–83 (FSVF…ANGL), 111–131 (VSGM…PLWS), 143–163 (VALL…LGML), 175–195 (LMVA…VIGW), 197–217 (LVGF…MLMT), 241–261 (AHSI…PVLL), 273–293 (GVVI…LTAM), 318–338 (LIGG…PWIM), 358–378 (AAAV…AAAL), 381–401 (AYSL…LLPL), and 407–427 (TVVA…VALA).

To M.tuberculosis Rv1510 and M.bovis Mb3654.

The protein localises to the cell membrane. This is an uncharacterized protein from Mycobacterium tuberculosis (strain ATCC 25618 / H37Rv).